The primary structure comprises 234 residues: Proteasome subunit alpha type-6 (234 aa).

Serine 14 carries the phosphoserine modification. Residue lysine 191 forms a Glycyl lysine isopeptide (Lys-Gly) (interchain with G-Cter in ubiquitin) linkage.

The protein belongs to the peptidase T1A family. The 26S proteasome consists of a 20S proteasome core and two 19S regulatory subunits. The 20S proteasome core is composed of 28 subunits that are arranged in four stacked rings, resulting in a barrel-shaped structure. The two end rings are each formed by seven alpha subunits, and the two central rings are each formed by seven beta subunits. The catalytic chamber with the active sites is on the inside of the barrel.

It is found in the cytoplasm. Its subcellular location is the nucleus. Functionally, the proteasome degrades poly-ubiquitinated proteins in the cytoplasm and in the nucleus. It is essential for the regulated turnover of proteins and for the removal of misfolded proteins. The proteasome is a multicatalytic proteinase complex that is characterized by its ability to cleave peptides with Arg, Phe, Tyr, Leu, and Glu adjacent to the leaving group at neutral or slightly basic pH. It has an ATP-dependent proteolytic activity. This chain is Proteasome subunit alpha type-6 (PRE5), found in Saccharomyces cerevisiae (strain ATCC 204508 / S288c) (Baker's yeast).